Reading from the N-terminus, the 570-residue chain is Urease subunit alpha 1 (570 aa).

In terms of domain architecture, Urease spans 131–570 (GGIDTHVHFI…VPMAQRYFLF (440 aa)). The Ni(2+) site is built by H136, H138, and K219. N6-carboxylysine is present on K219. Position 221 (H221) interacts with substrate. Ni(2+) is bound by residues H248 and H274. Catalysis depends on H322, which acts as the Proton donor. Residue D362 coordinates Ni(2+).

The protein belongs to the metallo-dependent hydrolases superfamily. Urease alpha subunit family. As to quaternary structure, heterotrimer of UreA (gamma), UreB (beta) and UreC (alpha) subunits. Three heterotrimers associate to form the active enzyme. The cofactor is Ni cation. Carboxylation allows a single lysine to coordinate two nickel ions.

The protein resides in the cytoplasm. It catalyses the reaction urea + 2 H2O + H(+) = hydrogencarbonate + 2 NH4(+). The protein operates within nitrogen metabolism; urea degradation; CO(2) and NH(3) from urea (urease route): step 1/1. This is Urease subunit alpha 1 from Brucella melitensis biotype 1 (strain ATCC 23456 / CCUG 17765 / NCTC 10094 / 16M).